We begin with the raw amino-acid sequence, 44 residues long: uncharacterized protein (44 aa).

This is an uncharacterized protein from Caenorhabditis elegans.